The following is a 752-amino-acid chain: Protein GCN20 (752 aa).

Ala-2 carries the N-acetylalanine modification. 2 ABC transporter domains span residues 199 to 464 (IHID…RKNA) and 532 to 748 (IQLQ…AAGV). ATP contacts are provided by residues 232-239 (GQNGIGKS) and 565-572 (GANGCGKT).

The protein belongs to the ABC transporter superfamily. ABCF family. EF3 subfamily. As to quaternary structure, interacts (via N-terminus) with GCN1 (via C-terminus); this interaction stimulates GCN2 kinase activity in response to amino acid starvation. The GCN1-GCN20 complex interacts with GCN2 on translating ribosomes in amino acid-starved cells; this association stimulates GCN2 kinase activation by uncharged tRNAs, and hence allowing GCN4 translational activation and derepression of amino acid biosynthetic genes. Associates with ribosomes.

Its function is as follows. Acts as a positive activator of the GCN2 protein kinase activity in response to in response to low amino acid, carbon, or purine availability. Component of the GCN1-GCN20 complex that forms a complex with GCN2 on translating ribosomes; during this process, GCN20 helps GCN1 to act as a chaperone to facilitate delivery of uncharged tRNAs that enter the A site of ribosomes to the tRNA-binding domain of GCN2, and hence stimulating GCN2 kinase activity. Participates in gene-specific mRNA translation activation, such as the transcriptional activator GCN4, by promoting the GCN2-mediated phosphorylation of eukaryotic translation initiation factor 2 (eIF-2-alpha/SUI2) on 'Ser-52', and hence allowing GCN4-mediated reprogramming of amino acid biosynthetic gene expression to alleviate nutrient depletion. The protein is Protein GCN20 of Saccharomyces cerevisiae (strain ATCC 204508 / S288c) (Baker's yeast).